A 222-amino-acid polypeptide reads, in one-letter code: Peptide methionine sulfoxide reductase MsrA 1 (222 aa).

C57 is a catalytic residue.

The protein belongs to the MsrA Met sulfoxide reductase family.

The enzyme catalyses L-methionyl-[protein] + [thioredoxin]-disulfide + H2O = L-methionyl-(S)-S-oxide-[protein] + [thioredoxin]-dithiol. The catalysed reaction is [thioredoxin]-disulfide + L-methionine + H2O = L-methionine (S)-S-oxide + [thioredoxin]-dithiol. Its function is as follows. Has an important function as a repair enzyme for proteins that have been inactivated by oxidation. Catalyzes the reversible oxidation-reduction of methionine sulfoxide in proteins to methionine. In Synechocystis sp. (strain ATCC 27184 / PCC 6803 / Kazusa), this protein is Peptide methionine sulfoxide reductase MsrA 1 (msrA1).